Here is a 170-residue protein sequence, read N- to C-terminus: Adenine phosphoribosyltransferase (170 aa).

This sequence belongs to the purine/pyrimidine phosphoribosyltransferase family. As to quaternary structure, homodimer.

It is found in the cytoplasm. It catalyses the reaction AMP + diphosphate = 5-phospho-alpha-D-ribose 1-diphosphate + adenine. The protein operates within purine metabolism; AMP biosynthesis via salvage pathway; AMP from adenine: step 1/1. Catalyzes a salvage reaction resulting in the formation of AMP, that is energically less costly than de novo synthesis. The chain is Adenine phosphoribosyltransferase from Acaryochloris marina (strain MBIC 11017).